A 458-amino-acid chain; its full sequence is ATP synthase subunit beta (458 aa).

148–155 contributes to the ATP binding site; it reads GGAGVGKT.

Belongs to the ATPase alpha/beta chains family. In terms of assembly, F-type ATPases have 2 components, CF(1) - the catalytic core - and CF(0) - the membrane proton channel. CF(1) has five subunits: alpha(3), beta(3), gamma(1), delta(1), epsilon(1). CF(0) has three main subunits: a(1), b(2) and c(9-12). The alpha and beta chains form an alternating ring which encloses part of the gamma chain. CF(1) is attached to CF(0) by a central stalk formed by the gamma and epsilon chains, while a peripheral stalk is formed by the delta and b chains.

Its subcellular location is the cell inner membrane. The catalysed reaction is ATP + H2O + 4 H(+)(in) = ADP + phosphate + 5 H(+)(out). Its function is as follows. Produces ATP from ADP in the presence of a proton gradient across the membrane. The catalytic sites are hosted primarily by the beta subunits. The chain is ATP synthase subunit beta from Francisella tularensis subsp. holarctica (strain FTNF002-00 / FTA).